Here is a 318-residue protein sequence, read N- to C-terminus: Guanidinopropionase (318 aa).

6 residues coordinate Mn(2+): His126, Asp148, His150, Asp152, Asp240, and Asp242.

This sequence belongs to the arginase family. Agmatinase subfamily. As to quaternary structure, homohexamer. The cofactor is Mn(2+).

The enzyme catalyses 3-guanidinopropanoate + H2O = urea + beta-alanine. Catalyzes the hydrolysis of 3-guanidinopropanoate to beta-alanine and urea. Possesses low activity against 4-guanidinobutanoate. Has no activity against arginine and agmatine. This is Guanidinopropionase (gpuA) from Pseudomonas aeruginosa (strain ATCC 15692 / DSM 22644 / CIP 104116 / JCM 14847 / LMG 12228 / 1C / PRS 101 / PAO1).